Here is a 565-residue protein sequence, read N- to C-terminus: Periplasmic trehalase (565 aa).

An N-terminal signal peptide occupies residues 1 to 30 (MKSPTPSRPQKMALIPACIFLCFAALSVQA). Substrate contacts are provided by residues Arg-152, 159–160 (WD), Asn-196, 205–207 (RSQ), 277–279 (RPE), and Gly-310. Active-site proton donor/acceptor residues include Asp-312 and Glu-496. Glu-511 contacts substrate. The segment at 539–565 (CDNVPATRPLSESTTQPLKQKEAEPTP) is disordered.

Belongs to the glycosyl hydrolase 37 family. Monomer.

The protein localises to the periplasm. It carries out the reaction alpha,alpha-trehalose + H2O = alpha-D-glucose + beta-D-glucose. In terms of biological role, provides the cells with the ability to utilize trehalose at high osmolarity by splitting it into glucose molecules that can subsequently be taken up by the phosphotransferase-mediated uptake system. The sequence is that of Periplasmic trehalase from Escherichia coli O7:K1 (strain IAI39 / ExPEC).